The sequence spans 132 residues: Histone H2A.1 (132 aa).

The segment at 1 to 21 (MSGGKGKAGTSEKASTSRSAK) is disordered. Residue serine 2 is modified to N-acetylserine. An N6-acetyllysine mark is found at lysine 5 and lysine 7. Glutamine 105 carries the N5-methylglutamine modification. Serine 129 carries the post-translational modification Phosphoserine. A [ST]-Q motif motif is present at residues 129-130 (SQ).

It belongs to the histone H2A family. The nucleosome is a histone octamer containing two molecules each of H2A, H2B, H3 and H4 assembled in one H3-H4 heterotetramer and two H2A-H2B heterodimers. The octamer wraps approximately 147 bp of DNA. In terms of processing, phosphorylated to form H2AS128ph (gamma-H2A) in response to DNA double-strand breaks (DSBs) generated by exogenous genotoxic agents and by stalled replication forks. Phosphorylation is dependent on the DNA damage checkpoint kinases MEC1/ATR and TEL1/ATM, spreads on either side of a detected DSB site and may mark the surrounding chromatin for recruitment of proteins required for DNA damage signaling and repair. Gamma-H2A is removed from the DNA prior to the strand invasion-primer extension step of the repair process and subsequently dephosphorylated. Dephosphorylation is necessary for efficient recovery from the DNA damage checkpoint. Post-translationally, acetylated by ESA1 to form H2AK4ac and H2AK7ac.

Its subcellular location is the nucleus. The protein localises to the chromosome. Core component of nucleosome which plays a central role in DNA double strand break (DSB) repair. Nucleosomes wrap and compact DNA into chromatin, limiting DNA accessibility to the cellular machineries which require DNA as a template. Histones thereby play a central role in transcription regulation, DNA repair, DNA replication and chromosomal stability. DNA accessibility is regulated via a complex set of post-translational modifications of histones, also called histone code, and nucleosome remodeling. This chain is Histone H2A.1 (HTA1), found in Candida albicans (strain SC5314 / ATCC MYA-2876) (Yeast).